We begin with the raw amino-acid sequence, 155 residues long: Endoribonuclease YbeY (155 aa).

3 residues coordinate Zn(2+): H114, H118, and H124.

It belongs to the endoribonuclease YbeY family. Zn(2+) serves as cofactor.

It localises to the cytoplasm. Functionally, single strand-specific metallo-endoribonuclease involved in late-stage 70S ribosome quality control and in maturation of the 3' terminus of the 16S rRNA. This Baumannia cicadellinicola subsp. Homalodisca coagulata protein is Endoribonuclease YbeY.